A 115-amino-acid polypeptide reads, in one-letter code: Chaperone protein PrsD (115 aa).

Belongs to the periplasmic pilus chaperone family.

The protein resides in the periplasm. In terms of biological role, mediates assembly of pili by forming soluble multimeric complexes with pili subunits as an intermediate step in the assembly process. The protein is Chaperone protein PrsD (prsD) of Escherichia coli.